The following is a 1067-amino-acid chain: Kinesin-like protein KIF11-A (1067 aa).

Residues 18–359 form the Kinesin motor domain; sequence NIQVVVRCRP…LDYASRAKNI (342 aa). 105–112 is a binding site for ATP; that stretch reads GQTGTGKT. Coiled-coil stretches lie at residues 365–480, 692–721, and 882–915; these read VNQK…QEAF, DSSSALSSIQSEYESLKEEIATAQSTHSEG, and QAQEKALTSLVEQVKDDKEMLGEQRLELNEQVQS. The residue at position 937 (Thr937) is a Phosphothreonine; by CDK1. The residue at position 1046 (Ser1046) is a Phosphoserine; by NEK6.

The protein belongs to the TRAFAC class myosin-kinesin ATPase superfamily. Kinesin family. BimC subfamily. As to quaternary structure, heterotetramer of two heavy and two light chains. Interacts with aurka. In terms of processing, phosphorylation of Thr-937 during mitosis controls the association of this protein with the spindle apparatus. Post-translationally, a subset of this protein primarily localized at the spindle pole is phosphorylated by NEK6 during mitosis. Phosphorylated on a serine residue by aurka. As to expression, highly expressed in unfertilized eggs, especially in the germinal vesicle and in the radial yolk-poor channels. Also present in testis.

The protein resides in the cytoplasm. It localises to the cytoskeleton. It is found in the spindle pole. In terms of biological role, plus end-directed motor protein required for establishing a bipolar spindle. Associates with both interphase and spindle microtubules. May be involved in nuclear divisions taking place during the development of unfertilized eggs. Required in non-mitotic cells for transport of secretory proteins from the Golgi complex to the cell surface. This Xenopus laevis (African clawed frog) protein is Kinesin-like protein KIF11-A (kif11-a).